Consider the following 311-residue polypeptide: Aspartate carbamoyltransferase catalytic subunit (311 aa).

Positions 55 and 56 each coordinate carbamoyl phosphate. Position 85 (Lys85) interacts with L-aspartate. Positions 106, 135, and 138 each coordinate carbamoyl phosphate. 2 residues coordinate L-aspartate: Arg168 and Arg230. Residues Leu268 and Pro269 each contribute to the carbamoyl phosphate site.

The protein belongs to the aspartate/ornithine carbamoyltransferase superfamily. ATCase family. In terms of assembly, heterododecamer (2C3:3R2) of six catalytic PyrB chains organized as two trimers (C3), and six regulatory PyrI chains organized as three dimers (R2).

The enzyme catalyses carbamoyl phosphate + L-aspartate = N-carbamoyl-L-aspartate + phosphate + H(+). It functions in the pathway pyrimidine metabolism; UMP biosynthesis via de novo pathway; (S)-dihydroorotate from bicarbonate: step 2/3. Its function is as follows. Catalyzes the condensation of carbamoyl phosphate and aspartate to form carbamoyl aspartate and inorganic phosphate, the committed step in the de novo pyrimidine nucleotide biosynthesis pathway. The sequence is that of Aspartate carbamoyltransferase catalytic subunit from Baumannia cicadellinicola subsp. Homalodisca coagulata.